Reading from the N-terminus, the 101-residue chain is Large ribosomal subunit protein bL21 (101 aa).

Belongs to the bacterial ribosomal protein bL21 family. Part of the 50S ribosomal subunit. Contacts protein L20.

Its function is as follows. This protein binds to 23S rRNA in the presence of protein L20. The polypeptide is Large ribosomal subunit protein bL21 (Thermus thermophilus (strain ATCC BAA-163 / DSM 7039 / HB27)).